A 943-amino-acid polypeptide reads, in one-letter code: UvrABC system protein A (943 aa).

An ATP-binding site is contributed by 32 to 39 (GLSGSGKS). The segment at 251-278 (CPVCGFTVPELEPRLFSFNAPFGSCSEC) adopts a C4-type zinc-finger fold. ABC transporter domains follow at residues 308 to 589 (WNPI…SKSI) and 609 to 937 (GNGR…HYLK). 641-648 (GVSGSGKS) is a binding site for ATP. The segment at 740–766 (CEACSGDGIIKIEMHFLPDVYVACEVC) adopts a C4-type zinc-finger fold.

Belongs to the ABC transporter superfamily. UvrA family. In terms of assembly, forms a heterotetramer with UvrB during the search for lesions.

The protein resides in the cytoplasm. In terms of biological role, the UvrABC repair system catalyzes the recognition and processing of DNA lesions. UvrA is an ATPase and a DNA-binding protein. A damage recognition complex composed of 2 UvrA and 2 UvrB subunits scans DNA for abnormalities. When the presence of a lesion has been verified by UvrB, the UvrA molecules dissociate. This chain is UvrABC system protein A, found in Streptococcus pneumoniae serotype 4 (strain ATCC BAA-334 / TIGR4).